The primary structure comprises 273 residues: Tryptophan synthase alpha chain (273 aa).

Residues E56 and D67 each act as proton acceptor in the active site.

Belongs to the TrpA family. As to quaternary structure, tetramer of two alpha and two beta chains.

The catalysed reaction is (1S,2R)-1-C-(indol-3-yl)glycerol 3-phosphate + L-serine = D-glyceraldehyde 3-phosphate + L-tryptophan + H2O. Its pathway is amino-acid biosynthesis; L-tryptophan biosynthesis; L-tryptophan from chorismate: step 5/5. In terms of biological role, the alpha subunit is responsible for the aldol cleavage of indoleglycerol phosphate to indole and glyceraldehyde 3-phosphate. The sequence is that of Tryptophan synthase alpha chain from Shewanella baltica (strain OS155 / ATCC BAA-1091).